Consider the following 413-residue polypeptide: Putative competence-damage inducible protein (413 aa).

Belongs to the CinA family.

The sequence is that of Putative competence-damage inducible protein from Lacticaseibacillus paracasei (strain ATCC 334 / BCRC 17002 / CCUG 31169 / CIP 107868 / KCTC 3260 / NRRL B-441) (Lactobacillus paracasei).